We begin with the raw amino-acid sequence, 433 residues long: N-lysine methyltransferase SMYD2 (433 aa).

The region spanning 7 to 241 (GGLERFCSAG…PGDEVFTSYI (235 aa)) is the SET domain. 17-19 (KGR) contacts S-adenosyl-L-methionine. The Zn(2+) site is built by C52, C55, C65, C68, C74, C78, H86, and C90. The segment at 52–90 (CECCFARKEGLSKCGRCKQAFYCDVECQKEDWPLHKLEC) adopts an MYND-type zinc-finger fold. S-adenosyl-L-methionine-binding positions include H137, 206-207 (NH), and 258-260 (YFF). S283 is modified (phosphoserine).

It belongs to the class V-like SAM-binding methyltransferase superfamily. As to quaternary structure, interacts (via MYND-type zinc finger) with EPB41L3. Interacts (via SET domain) with p53/TP53. Interacts with RB1 and HSP90AA1. Interacts with RNA polymerase II and HELZ. Interacts with SIN3A and HDAC1. Highly expressed in heart, skeletal muscle and brain tissue. During cardiac development, it is differentially expressed with highest expression in the neonatal heart while very low expression is detected at 12.5 dpc and adult. Specifically expressed in cardiomyocytes (at protein level).

The protein localises to the cytoplasm. The protein resides in the cytosol. It is found in the nucleus. It carries out the reaction L-lysyl(4)-[histone H3] + 3 S-adenosyl-L-methionine = N(6),N(6),N(6)-trimethyl-L-lysyl(4)-[histone H3] + 3 S-adenosyl-L-homocysteine + 3 H(+). The enzyme catalyses L-lysyl-[protein] + S-adenosyl-L-methionine = N(6)-methyl-L-lysyl-[protein] + S-adenosyl-L-homocysteine + H(+). Protein-lysine N-methyltransferase that methylates both histones and non-histone proteins, including p53/TP53 and RB1. Specifically trimethylates histone H3 'Lys-4' (H3K4me3) in vivo. The activity requires interaction with HSP90alpha. Shows even higher methyltransferase activity on p53/TP53. Monomethylates 'Lys-370' of p53/TP53, leading to decreased DNA-binding activity and subsequent transcriptional regulation activity of p53/TP53. Monomethylates RB1 at 'Lys-860'. The sequence is that of N-lysine methyltransferase SMYD2 (Smyd2) from Mus musculus (Mouse).